The chain runs to 361 residues: Holliday junction branch migration complex subunit RuvB (361 aa).

The disordered stretch occupies residues 1 to 21 (MHKDEDQRLLGAVPLPNDPDR). Residues 1 to 184 (MHKDEDQRLL…FGIPIRLNFY (184 aa)) form a large ATPase domain (RuvB-L) region. ATP is bound by residues Leu-23, Arg-24, Gly-65, Lys-68, Thr-69, Thr-70, 131 to 133 (EDY), Arg-174, Tyr-184, and Arg-221. Thr-69 contacts Mg(2+). Residues 185–255 (TIEELEYIVQ…IADEALSRLE (71 aa)) form a small ATPAse domain (RuvB-S) region. Positions 258–361 (HLGLDPLDRR…QTVLWDEADD (104 aa)) are head domain (RuvB-H). DNA is bound by residues Arg-294, Arg-313, and Arg-318.

It belongs to the RuvB family. As to quaternary structure, homohexamer. Forms an RuvA(8)-RuvB(12)-Holliday junction (HJ) complex. HJ DNA is sandwiched between 2 RuvA tetramers; dsDNA enters through RuvA and exits via RuvB. An RuvB hexamer assembles on each DNA strand where it exits the tetramer. Each RuvB hexamer is contacted by two RuvA subunits (via domain III) on 2 adjacent RuvB subunits; this complex drives branch migration. In the full resolvosome a probable DNA-RuvA(4)-RuvB(12)-RuvC(2) complex forms which resolves the HJ.

The protein resides in the cytoplasm. The enzyme catalyses ATP + H2O = ADP + phosphate + H(+). In terms of biological role, the RuvA-RuvB-RuvC complex processes Holliday junction (HJ) DNA during genetic recombination and DNA repair, while the RuvA-RuvB complex plays an important role in the rescue of blocked DNA replication forks via replication fork reversal (RFR). RuvA specifically binds to HJ cruciform DNA, conferring on it an open structure. The RuvB hexamer acts as an ATP-dependent pump, pulling dsDNA into and through the RuvAB complex. RuvB forms 2 homohexamers on either side of HJ DNA bound by 1 or 2 RuvA tetramers; 4 subunits per hexamer contact DNA at a time. Coordinated motions by a converter formed by DNA-disengaged RuvB subunits stimulates ATP hydrolysis and nucleotide exchange. Immobilization of the converter enables RuvB to convert the ATP-contained energy into a lever motion, pulling 2 nucleotides of DNA out of the RuvA tetramer per ATP hydrolyzed, thus driving DNA branch migration. The RuvB motors rotate together with the DNA substrate, which together with the progressing nucleotide cycle form the mechanistic basis for DNA recombination by continuous HJ branch migration. Branch migration allows RuvC to scan DNA until it finds its consensus sequence, where it cleaves and resolves cruciform DNA. The chain is Holliday junction branch migration complex subunit RuvB from Bartonella henselae (strain ATCC 49882 / DSM 28221 / CCUG 30454 / Houston 1) (Rochalimaea henselae).